The primary structure comprises 646 residues: ATP-dependent zinc metalloprotease FtsH (646 aa).

A disordered region spans residues 1-27 (MTNNQTDRPRPPGPESRRFDNNDKNNR). At 1-35 (MTNNQTDRPRPPGPESRRFDNNDKNNRNRWGPIPS) the chain is on the cytoplasmic side. The segment covering 7-26 (DRPRPPGPESRRFDNNDKNN) has biased composition (basic and acidic residues). Residues 36 to 56 (WAWIVLIVALLLNWLVAPILF) traverse the membrane as a helical segment. Over 57–144 (PEGKGAVSIP…QPESSTRSLL (88 aa)) the chain is Extracellular. Residues 145–165 (LSILISFGPTILFFLLFLWLI) form a helical membrane-spanning segment. The Cytoplasmic segment spans residues 166–646 (SKAQSSQQGL…GLGEKQPEPA (481 aa)). 237–244 (GPPGTGKT) serves as a coordination point for ATP. His-459 is a binding site for Zn(2+). Glu-460 is an active-site residue. His-463 and Asp-535 together coordinate Zn(2+).

In the central section; belongs to the AAA ATPase family. This sequence in the C-terminal section; belongs to the peptidase M41 family. As to quaternary structure, homohexamer. Zn(2+) serves as cofactor.

The protein localises to the cell membrane. Acts as a processive, ATP-dependent zinc metallopeptidase for both cytoplasmic and membrane proteins. Plays a role in the quality control of integral membrane proteins. This is ATP-dependent zinc metalloprotease FtsH from Thermobaculum terrenum (strain ATCC BAA-798 / CCMEE 7001 / YNP1).